The chain runs to 115 residues: Large ribosomal subunit protein bL20 (115 aa).

The protein belongs to the bacterial ribosomal protein bL20 family.

Its function is as follows. Binds directly to 23S ribosomal RNA and is necessary for the in vitro assembly process of the 50S ribosomal subunit. It is not involved in the protein synthesizing functions of that subunit. The polypeptide is Large ribosomal subunit protein bL20 (Chlorobium chlorochromatii (strain CaD3)).